The chain runs to 600 residues: Elongation factor 4 (600 aa).

The 183-residue stretch at K5–K187 folds into the tr-type G domain. GTP contacts are provided by residues D17–T22 and N134–D137.

It belongs to the TRAFAC class translation factor GTPase superfamily. Classic translation factor GTPase family. LepA subfamily.

The protein resides in the cell inner membrane. The enzyme catalyses GTP + H2O = GDP + phosphate + H(+). Its function is as follows. Required for accurate and efficient protein synthesis under certain stress conditions. May act as a fidelity factor of the translation reaction, by catalyzing a one-codon backward translocation of tRNAs on improperly translocated ribosomes. Back-translocation proceeds from a post-translocation (POST) complex to a pre-translocation (PRE) complex, thus giving elongation factor G a second chance to translocate the tRNAs correctly. Binds to ribosomes in a GTP-dependent manner. The chain is Elongation factor 4 from Rickettsia prowazekii (strain Madrid E).